The primary structure comprises 451 residues: MRECISIHIGQAGIQVGNARWELYCLEHGIQPDGQMPSDKTVGGGDDAFNTFFSETGAGKHVPRAVFLDLEPTVIDEVRTGTYRQLFHPEQLISGKEDAANNFARGHYTIGKEIVDLCLDRIRKLADNCTGLQGFLVFHAVGGXTGSGLGSLLLERLSVDYGKKSKLGFTVYPSPQVSTSVVEPYNSVLSTHSLLEHTDVSVLLDNEAIYDICRRSLDIERPTYTNLNRLVSQVISSLTASLRFDGALNVDVTEFQTNLVPYPRIHFMLSSYAPVISAEKAYHEQLSVAEITNSAFEPASMMAKCDPRHGKYMACCLMYRGDVVPKDVNAAVATIKTKRTIQFVDWCPTGFKCGINYQPPTVVPGGDLAKVQRAVCMISNSTSVAEVFSRIDHKFDLMYAKRAFVHWYVGEGMEEGEFSEAREDLAALEKDYEEVGAESGEGEEGDEGEEY.

Gln-11 is a GTP binding site. Lys-40 carries the N6-acetyllysine modification. Glu-71, Thr-145, Thr-179, Asn-206, and Asn-228 together coordinate GTP. Glu-71 lines the Mg(2+) pocket. The active site involves Glu-254. The tract at residues 429–451 (EKDYEEVGAESGEGEEGDEGEEY) is disordered. A compositionally biased stretch (acidic residues) spans 431 to 451 (DYEEVGAESGEGEEGDEGEEY).

It belongs to the tubulin family. In terms of assembly, dimer of alpha and beta chains. A typical microtubule is a hollow water-filled tube with an outer diameter of 25 nm and an inner diameter of 15 nM. Alpha-beta heterodimers associate head-to-tail to form protofilaments running lengthwise along the microtubule wall with the beta-tubulin subunit facing the microtubule plus end conferring a structural polarity. Microtubules usually have 13 protofilaments but different protofilament numbers can be found in some organisms and specialized cells. Mg(2+) is required as a cofactor. In terms of processing, undergoes a tyrosination/detyrosination cycle, the cyclic removal and re-addition of a C-terminal tyrosine residue by the enzymes tubulin tyrosine carboxypeptidase (TTCP) and tubulin tyrosine ligase (TTL), respectively. Post-translationally, acetylation of alpha chains at Lys-40 stabilizes microtubules and affects affinity and processivity of microtubule motors. This modification has a role in multiple cellular functions, ranging from cell motility, cell cycle progression or cell differentiation to intracellular trafficking and signaling.

The protein localises to the cytoplasm. The protein resides in the cytoskeleton. The catalysed reaction is GTP + H2O = GDP + phosphate + H(+). Its function is as follows. Tubulin is the major constituent of microtubules, a cylinder consisting of laterally associated linear protofilaments composed of alpha- and beta-tubulin heterodimers. Microtubules grow by the addition of GTP-tubulin dimers to the microtubule end, where a stabilizing cap forms. Below the cap, tubulin dimers are in GDP-bound state, owing to GTPase activity of alpha-tubulin. The chain is Tubulin alpha-1 chain (TUBA1) from Anemia phyllitidis (Fern).